Reading from the N-terminus, the 452-residue chain is MVSEDKIEQWKATKVIGIIGLGDMGLLYANKFTDAGWGVICCDREEYYDELKEKYASAKFELVKNGHLVSRQSDYIIYSVEASNISKIVATYGPSSKVGTIVGGQTSCKLPEIEAFEKYLPKDCDIITVHSLHGPKVNTEGQPLVIINHRSQYPESFEFVNSVMACLKSKQVYLTYEEHDKITADTQAVTHAAFLSMGSAWAKIKIYPWTLGVNKWYGGLENVKVNISLRIYSNKWHVYAGLAITNPSAHQQILQYATSATELFSLMIDNKEQELTDRLLKAKQFVFGKHTGLLLLDDTILEKYSLSKSSIGNSNNCKPVPNSHLSLLAIVDSWFQLGIDPYDHMICSTPLFRIFLGVSEYLFLKPGLLEQTIDAAIHDKSFIKDDLEFVISAREWSSVVSFANFDIYKKQFQSVQKFFEPMLPEANLIGNEMIKTILSHSSDRSAAEKRNT.

14-43 (KVIGIIGLGDMGLLYANKFTDAGWGVICCD) lines the NADP(+) pocket. In terms of domain architecture, Prephenate/arogenate dehydrogenase spans 14 to 297 (KVIGIIGLGD…GKHTGLLLLD (284 aa)).

It belongs to the prephenate/arogenate dehydrogenase family.

The catalysed reaction is prephenate + NADP(+) = 3-(4-hydroxyphenyl)pyruvate + CO2 + NADPH. It functions in the pathway amino-acid biosynthesis; L-tyrosine biosynthesis; (4-hydroxyphenyl)pyruvate from prephenate (NADP(+) route): step 1/1. The sequence is that of Prephenate dehydrogenase [NADP(+)] (TYR1) from Saccharomyces cerevisiae (strain ATCC 204508 / S288c) (Baker's yeast).